The sequence spans 288 residues: Mortality factor 4-like protein 2 (288 aa).

Positions 1–15 (MSSRKQGSQPRGQQS) are enriched in polar residues. A disordered region spans residues 1 to 113 (MSSRKQGSQP…RADPTVESEE (113 aa)). Ser-71 bears the Phosphoserine mark. The MRG domain maps to 117–288 (NRMEVKVKIP…ASAEYHRKAL (172 aa)).

In terms of assembly, component of the NuA4 histone acetyltransferase complex which contains the catalytic subunit KAT5/TIP60 and the subunits EP400, TRRAP/PAF400, BRD8/SMAP, EPC1, DMAP1/DNMAP1, RUVBL1/TIP49, RUVBL2, ING3, actin, ACTL6A/BAF53A, MORF4L1/MRG15, MORF4L2/MRGX, MRGBP, YEATS4/GAS41 and VPS72/YL1. The NuA4 complex interacts with MYC and the adenovirus E1A protein. MORF4L1 may also participate in the formation of NuA4 related complexes which lack the KAT5/TIP60 catalytic subunit, but which include the SWI/SNF related protein SRCAP. Component of the MSIN3A histone deacetylase complex, which includes SIN3A, HDAC2, ARID4B, MORF4L1, RBBP4/RbAp48, and RBBP7/RbAp46. Interacts with MRFAP1 and RB1. May also interact with one or more as yet undefined members of the TLE (transducin-like enhancer of split) family of transcriptional repressors.

The protein localises to the nucleus. Component of the NuA4 histone acetyltransferase complex which is involved in transcriptional activation of select genes principally by acetylation of nucleosomal histone H4 and H2A. This modification may both alter nucleosome - DNA interactions and promote interaction of the modified histones with other proteins which positively regulate transcription. This complex may be required for the activation of transcriptional programs associated with oncogene and proto-oncogene mediated growth induction, tumor suppressor mediated growth arrest and replicative senescence, apoptosis, and DNA repair. The NuA4 complex ATPase and helicase activities seem to be, at least in part, contributed by the association of RUVBL1 and RUVBL2 with EP400. NuA4 may also play a direct role in DNA repair when directly recruited to sites of DNA damage. Also a component of the MSIN3A complex which acts to repress transcription by deacetylation of nucleosomal histones. The sequence is that of Mortality factor 4-like protein 2 (MORF4L2) from Macaca fascicularis (Crab-eating macaque).